Reading from the N-terminus, the 436-residue chain is MEMKNVKGTKDYLPEEQVLRNKIKRACEDTFERYGCKPLETPTLNMYELMSYKYGGGDEILKEIYTLQDQGKRNLALRYDLTIPFAKVVAMNPNIRLPFKRYEIGKVFRDGPIKQGRFREFIQCDVDIVGVESVMAEAELMSMAFELFRTLNLEVTIQYNNRKLLNGILESINIPTERTSDVILSLDKIEKIGIDGVRKDVLERGISEEMADTICNTVLSCLKLTIADFKEAFNNPLVADGVNELQQLQQYLIALGINENAIFNPFLARGLTMYTGTVYEIFLKDGSITSSIGSGGRYDNIIGAFRGDNMNYPTVGISFGLDVIYTALSQKETISSTADVFIIPLGTELQCLQIAQQLRSTTSLKVELELAGRKLKRALNYANKENIPYVLIIGEDELSTETVVLRNMKEGSEVKVPLSSLKDNTFNNYCNIPIKL.

Belongs to the class-II aminoacyl-tRNA synthetase family. As to quaternary structure, homodimer.

Its subcellular location is the cytoplasm. The enzyme catalyses tRNA(His) + L-histidine + ATP = L-histidyl-tRNA(His) + AMP + diphosphate + H(+). This chain is Histidine--tRNA ligase 1, found in Bacillus cereus (strain ATCC 10987 / NRS 248).